A 34-amino-acid chain; its full sequence is Photosystem II reaction center protein M (34 aa).

The helical transmembrane segment at 5 to 25 (ILALIAIALFISVPTAFLIII) threads the bilayer.

Belongs to the PsbM family. PSII is composed of 1 copy each of membrane proteins PsbA, PsbB, PsbC, PsbD, PsbE, PsbF, PsbH, PsbI, PsbJ, PsbK, PsbL, PsbM, PsbT, PsbX, PsbY, PsbZ, Psb30/Ycf12, at least 3 peripheral proteins of the oxygen-evolving complex and a large number of cofactors. It forms dimeric complexes.

It is found in the plastid. Its subcellular location is the chloroplast thylakoid membrane. Its function is as follows. One of the components of the core complex of photosystem II (PSII). PSII is a light-driven water:plastoquinone oxidoreductase that uses light energy to abstract electrons from H(2)O, generating O(2) and a proton gradient subsequently used for ATP formation. It consists of a core antenna complex that captures photons, and an electron transfer chain that converts photonic excitation into a charge separation. This subunit is found at the monomer-monomer interface. This is Photosystem II reaction center protein M from Gnetum parvifolium (Small-leaved jointfir).